An 842-amino-acid chain; its full sequence is Probable cleavage and polyadenylation specificity factor subunit 2 (842 aa).

Residues 414-425 (AEETRIRMERAR) show a composition bias toward basic and acidic residues. Disordered stretches follow at residues 414 to 442 (AEET…DDIA) and 708 to 747 (METF…SIPI). The segment covering 432-441 (ESDDSDDDDI) has biased composition (acidic residues). A compositionally biased stretch (polar residues) spans 731-747 (SNGQSKENDENASSIPI).

The protein belongs to the metallo-beta-lactamase superfamily. RNA-metabolizing metallo-beta-lactamase-like family. CPSF2/YSH1 subfamily. As to quaternary structure, CPSF is a heterotetramer composed of four distinct subunits 160, 100, 70 and 30 kDa.

The protein resides in the nucleus. Its function is as follows. CPSF plays a key role in pre-mRNA 3'-end formation, recognizing the AAUAAA signal sequence and interacting with poly(A)polymerase and other factors to bring about cleavage and poly(A) addition. The chain is Probable cleavage and polyadenylation specificity factor subunit 2 from Caenorhabditis briggsae.